The chain runs to 194 residues: ATP-dependent Clp protease proteolytic subunit 4 (194 aa).

Ser100 functions as the Nucleophile in the catalytic mechanism. Residue His125 is part of the active site.

It belongs to the peptidase S14 family. As to quaternary structure, fourteen ClpP subunits assemble into 2 heptameric rings which stack back to back to give a disk-like structure with a central cavity, resembling the structure of eukaryotic proteasomes.

The protein resides in the cytoplasm. It catalyses the reaction Hydrolysis of proteins to small peptides in the presence of ATP and magnesium. alpha-casein is the usual test substrate. In the absence of ATP, only oligopeptides shorter than five residues are hydrolyzed (such as succinyl-Leu-Tyr-|-NHMec, and Leu-Tyr-Leu-|-Tyr-Trp, in which cleavage of the -Tyr-|-Leu- and -Tyr-|-Trp bonds also occurs).. Its function is as follows. Cleaves peptides in various proteins in a process that requires ATP hydrolysis. Has a chymotrypsin-like activity. Plays a major role in the degradation of misfolded proteins. The polypeptide is ATP-dependent Clp protease proteolytic subunit 4 (Rhodococcus jostii (strain RHA1)).